The primary structure comprises 427 residues: Ectonucleoside triphosphate diphosphohydrolase 5 (427 aa).

An N-terminal signal peptide occupies residues 1 to 24 (MATSWGAVFMLIIACVGSTVFYRE). Catalysis depends on Glu-171, which acts as the Proton acceptor. N-linked (GlcNAc...) asparagine glycosylation occurs at Asn-231. Disulfide bonds link Cys-271-Cys-302 and Cys-362-Cys-376.

Belongs to the GDA1/CD39 NTPase family. Monomer; active form. Homodimer; disulfide-linked. Homodimers are enzymatically inactive. It depends on Ca(2+) as a cofactor. Mg(2+) is required as a cofactor. In terms of processing, N-glycosylated; high-mannose type. Ubiquitous.

Its subcellular location is the endoplasmic reticulum. The protein localises to the secreted. It catalyses the reaction a ribonucleoside 5'-diphosphate + H2O = a ribonucleoside 5'-phosphate + phosphate + H(+). The catalysed reaction is GDP + H2O = GMP + phosphate + H(+). The enzyme catalyses UDP + H2O = UMP + phosphate + H(+). It carries out the reaction IDP + H2O = IMP + phosphate + H(+). It catalyses the reaction CDP + H2O = CMP + phosphate + H(+). The catalysed reaction is ADP + H2O = AMP + phosphate + H(+). It functions in the pathway protein modification; protein glycosylation. Its function is as follows. Hydrolyzes nucleoside diphosphates with a preference for GDP, IDP and UDP compared to ADP and CDP. In the lumen of the endoplasmic reticulum, hydrolyzes UDP that acts as an end-product feedback inhibitor of the UDP-Glc:glycoprotein glucosyltransferases. UMP can be transported back by an UDP-sugar antiporter to the cytosol where it is consumed to regenerate UDP-glucose. Therefore, it positively regulates protein reglucosylation by clearing UDP from the ER lumen and by promoting the regeneration of UDP-glucose. Protein reglucosylation is essential to proper glycoprotein folding and quality control in the ER. The protein is Ectonucleoside triphosphate diphosphohydrolase 5 (Entpd5) of Mus musculus (Mouse).